The primary structure comprises 358 residues: Carbohydrate sulfotransferase 10 (358 aa).

Residues Met-1–Leu-6 lie on the Cytoplasmic side of the membrane. The chain crosses the membrane as a helical; Signal-anchor for type II membrane protein span at residues Leu-7–Leu-27. Over Thr-28–Asn-358 the chain is Lumenal. Asn-101 is a glycosylation site (N-linked (GlcNAc...) asparagine). Residues Pro-129–Gln-135 and Arg-191–Ser-199 each bind 3'-phosphoadenylyl sulfate. Asn-318 carries an N-linked (GlcNAc...) asparagine glycan.

It belongs to the sulfotransferase 2 family. As to expression, predominantly expressed in hypertrophic, prehypertrophic and proliferative chondrocytes at E12 but is down-regulated in epiphyseal chondrocytes.

It localises to the golgi apparatus membrane. Catalyzes the transfer of sulfate to position 3 of terminal glucuronic acid of both protein- and lipid-linked oligosaccharides. Participates in biosynthesis of HNK-1 carbohydrate structure, a sulfated glucuronyl-lactosaminyl residue carried by many neural recognition molecules, which is involved in cell interactions during ontogenetic development and in synaptic plasticity in the adult. The chain is Carbohydrate sulfotransferase 10 (CHST10) from Gallus gallus (Chicken).